Consider the following 257-residue polypeptide: UPF0246 protein BPP3440 (257 aa).

Belongs to the UPF0246 family.

The polypeptide is UPF0246 protein BPP3440 (Bordetella parapertussis (strain 12822 / ATCC BAA-587 / NCTC 13253)).